We begin with the raw amino-acid sequence, 138 residues long: Acidic phospholipase A2 inhibitor chain HPD-1I (138 aa).

A signal peptide spans 1 to 16 (MRTLWIVAVCLIGVEG). 7 disulfide bridges follow: Cys42/Cys131, Cys44/Cys60, Cys59/Cys111, Cys65/Cys138, Cys66/Cys104, Cys73/Cys97, and Cys91/Cys102.

As to quaternary structure, heterodimer of an acidic and a basic chain; non-covalently linked. The basic chain is toxic and has phospholipase A2 activity (chain HDP-1P (AC Q1RP79) or HDP-2P (AC Q1RP78)) and the acidic chain is non-toxic and functions as its inhibitor (chain HPD-1I). In terms of tissue distribution, expressed by the venom gland.

The protein localises to the secreted. Heterodimer: slightly affects neuromuscular transmission acting presynaptically. It has a low catalytic activity, a low anticoagulant activity and weakly inhibits ADP-induced platelet aggregation. Functionally, monomer: has no activity (neurotoxic, catalytic, anticoagulant and a ADP-induced platelet aggregation), but inhibits phospholipase A2. The protein is Acidic phospholipase A2 inhibitor chain HPD-1I of Vipera nikolskii (Nikolsky's adder).